The primary structure comprises 384 residues: Sialyltransferase-like protein 3 (384 aa).

Over 1–5 (MKRRH) the chain is Cytoplasmic. The helical; Signal-anchor for type II membrane protein transmembrane segment at 6 to 26 (WSHPSCGLLLLVAVFCLLLVF) threads the bilayer. The Lumenal segment spans residues 27 to 384 (RCSQLRHSGD…FRLPPVSFYR (358 aa)). Asparagine 241 carries an N-linked (GlcNAc...) asparagine glycan.

This sequence belongs to the glycosyltransferase 29 family.

The protein resides in the golgi apparatus membrane. Functionally, possesses sialyltransferase-like activity in vitro. Transfers sialic acid to the glycoprotein asialofetuin. The transferred sialic acid is linked to galactose of Gal-beta-1,3-GalNAc through alpha-2,6-linkage. The polypeptide is Sialyltransferase-like protein 3 (Oryza sativa subsp. indica (Rice)).